Consider the following 140-residue polypeptide: Required for drug-induced death protein 1 (140 aa).

The tract at residues 1 to 95 is disordered; it reads MTVGARLRSK…DKPKKRYRRK (95 aa). Residues 29-53 show a composition bias toward acidic residues; the sequence is EETDAIVEHLEGEDEDPESQDCERE. Residues 118 to 140 traverse the membrane as a helical segment; that stretch reads LQGFAAAYSAPFGVATSVVSFVR.

The protein resides in the membrane. In terms of biological role, regulates drug efflux through modulation of ABCB1 localization and activity. In Rattus norvegicus (Rat), this protein is Required for drug-induced death protein 1.